The chain runs to 370 residues: Chaperone protein DnaJ (370 aa).

A J domain is found at 7–73 (DYYEILGVPR…QKRAMYDRFG (67 aa)). A CR-type zinc finger spans residues 144–226 (GTEIPIEYER…CGGSGRVLRR (83 aa)). Residues C157, C160, C174, C177, C200, C203, C214, and C217 each coordinate Zn(2+). CXXCXGXG motif repeat units lie at residues 157–164 (CPRCGGTG), 174–181 (CPRCGGTG), 200–207 (CDECGGTG), and 214–221 (CHECGGSG).

The protein belongs to the DnaJ family. As to quaternary structure, homodimer. Zn(2+) is required as a cofactor.

The protein resides in the cytoplasm. Functionally, participates actively in the response to hyperosmotic and heat shock by preventing the aggregation of stress-denatured proteins and by disaggregating proteins, also in an autonomous, DnaK-independent fashion. Unfolded proteins bind initially to DnaJ; upon interaction with the DnaJ-bound protein, DnaK hydrolyzes its bound ATP, resulting in the formation of a stable complex. GrpE releases ADP from DnaK; ATP binding to DnaK triggers the release of the substrate protein, thus completing the reaction cycle. Several rounds of ATP-dependent interactions between DnaJ, DnaK and GrpE are required for fully efficient folding. Also involved, together with DnaK and GrpE, in the DNA replication of plasmids through activation of initiation proteins. The sequence is that of Chaperone protein DnaJ from Thermotoga neapolitana (strain ATCC 49049 / DSM 4359 / NBRC 107923 / NS-E).